Consider the following 153-residue polypeptide: uncharacterized protein (153 aa).

The next 2 helical transmembrane spans lie at 1-21 (MAATPAAIEVSLTIVFVLFFS) and 106-126 (IVPIPFYCISKAQECFLTVYI).

Its subcellular location is the membrane. This is an uncharacterized protein from Saccharomyces cerevisiae (strain ATCC 204508 / S288c) (Baker's yeast).